The primary structure comprises 387 residues: Ferrochelatase (387 aa).

Positions 196 and 277 each coordinate Fe cation.

This sequence belongs to the ferrochelatase family.

It localises to the cytoplasm. The catalysed reaction is heme b + 2 H(+) = protoporphyrin IX + Fe(2+). Its pathway is porphyrin-containing compound metabolism; protoheme biosynthesis; protoheme from protoporphyrin-IX: step 1/1. Its function is as follows. Catalyzes the ferrous insertion into protoporphyrin IX. This chain is Ferrochelatase, found in Rippkaea orientalis (strain PCC 8801 / RF-1) (Cyanothece sp. (strain PCC 8801)).